The following is a 65-amino-acid chain: Hainantoxin-X.2 (65 aa).

An N-terminal signal peptide occupies residues 1–20 (MNVKILVLVAVLCLVVSTHA). A propeptide spanning residues 21 to 37 (ERHSKTDMEDSPMIQER) is cleaved from the precursor. Cystine bridges form between Cys39–Cys56, Cys46–Cys59, and Cys55–Cys64.

The protein belongs to the neurotoxin 36 family. 02 subfamily. Expressed by the venom gland.

It localises to the secreted. Its function is as follows. Reversibly blocks N-type calcium channels (Cav2.2/CACNA1B) in rat dorsal root ganglion cells. Elicits no toxic symptoms in either vertebrates or invertebrates during a period of 48 hours post-injection, when it was assayed in vivo by direct injection into mice and cockroaches. The chain is Hainantoxin-X.2 from Cyriopagopus hainanus (Chinese bird spider).